Consider the following 197-residue polypeptide: Ribosome maturation factor RimP (197 aa).

The protein belongs to the RimP family.

It localises to the cytoplasm. Functionally, required for maturation of 30S ribosomal subunits. This Acidovorax ebreus (strain TPSY) (Diaphorobacter sp. (strain TPSY)) protein is Ribosome maturation factor RimP.